Here is a 232-residue protein sequence, read N- to C-terminus: Putative caffeoyl-CoA O-methyltransferase At1g67980 (232 aa).

Lys-8 is a binding site for substrate. Residues Val-52, Glu-74, 76 to 77 (GV), Ser-82, and Asp-100 contribute to the S-adenosyl-L-methionine site. Asp-149 serves as a coordination point for substrate. Asp-149 lines the a divalent metal cation pocket. Residue Asp-151 coordinates S-adenosyl-L-methionine. Positions 175 and 176 each coordinate a divalent metal cation.

This sequence belongs to the class I-like SAM-binding methyltransferase superfamily. Cation-dependent O-methyltransferase family. CCoAMT subfamily. Requires a divalent metal cation as cofactor.

The enzyme catalyses (E)-caffeoyl-CoA + S-adenosyl-L-methionine = (E)-feruloyl-CoA + S-adenosyl-L-homocysteine + H(+). It participates in aromatic compound metabolism; phenylpropanoid biosynthesis. Functionally, methylates caffeoyl-CoA to feruloyl-CoA and 5-hydroxyferuloyl-CoA to sinapoyl-CoA. Plays a role in the synthesis of feruloylated polysaccharides. Involved in the reinforcement of the plant cell wall. Also involved in the responding to wounding or pathogen challenge by the increased formation of cell wall-bound ferulic acid polymers. The sequence is that of Putative caffeoyl-CoA O-methyltransferase At1g67980 from Arabidopsis thaliana (Mouse-ear cress).